Here is a 652-residue protein sequence, read N- to C-terminus: MKKRIKELTDLLNRYRYDYYTKDAPSVSDSDYDKLYRELVTLEQSYPEYVLQDSPTQQVGGTILKGFEKYRHQYPLFSLQDAFSREELDAFDKRVKAEFPNATYLAELKIDGLSISLSYENGFLQVGATRGDGNIGENITENIKKIKDIPHQLSEPLTITVRGEAYMSRQSFKAINEARQENGETEFANPRNAAAGTLRQLDTAVVAKRQLATFLYQEASPTARNQQNEVLAELADLGFSVNPYYQLTSSMDEIWDFIKTIEAKRDQLAYDIDGVVIKVNSLAMQEELGFTVKAPRWAIAYKFPAEEKEAEILSVDWTVGRTGVVTPTANLTPVQLAGTTVSRATLHNVDYIAEKDIRIGDTVIVYKAGDIIPAVLNVVMSKRNQQEVMLIPKLCPSCGSELVHFEDEVALRCINPLCPSLIQRSLEHFASRDAMNITGLGPAIVEKLFLAGFVHDVADIYQLTKENFMQLDGIKEKSADKLLAAIEASKSNSAEKLLFGLGIRHIGSKVSRLILEVYGDISALLTAKEEEIARIDGLGSTIAQSLTQYFEQKTAAILVDELKTAGVNMHYSGQKVNSDAALFGLTVVLTGKLNQLNRNEAKDKLEALGAKVTGSVSKKTDLVIAGSDAGSKLEKAKSLGIRIEDEDWLRQL.

NAD(+) is bound by residues 29 to 33, 78 to 79, and Glu107; these read DSDYD and SL. Catalysis depends on Lys109, which acts as the N6-AMP-lysine intermediate. Arg130, Glu164, Lys278, and Lys302 together coordinate NAD(+). Zn(2+) is bound by residues Cys395, Cys398, Cys413, and Cys418. One can recognise a BRCT domain in the interval 577–652; the sequence is NSDAALFGLT…IEDEDWLRQL (76 aa).

The protein belongs to the NAD-dependent DNA ligase family. LigA subfamily. Mg(2+) serves as cofactor. Requires Mn(2+) as cofactor.

The catalysed reaction is NAD(+) + (deoxyribonucleotide)n-3'-hydroxyl + 5'-phospho-(deoxyribonucleotide)m = (deoxyribonucleotide)n+m + AMP + beta-nicotinamide D-nucleotide.. In terms of biological role, DNA ligase that catalyzes the formation of phosphodiester linkages between 5'-phosphoryl and 3'-hydroxyl groups in double-stranded DNA using NAD as a coenzyme and as the energy source for the reaction. It is essential for DNA replication and repair of damaged DNA. In Streptococcus pyogenes serotype M4 (strain MGAS10750), this protein is DNA ligase.